A 455-amino-acid polypeptide reads, in one-letter code: Xylan O-acetyltransferase 3 (455 aa).

Over residues 1–15 the composition is skewed to low complexity; sequence MSKPQQQSPPSTTTT. The tract at residues 1–32 is disordered; sequence MSKPQQQSPPSTTTTSPPPPPPSTPPPASSSR. At 1-42 the chain is on the cytoplasmic side; that stretch reads MSKPQQQSPPSTTTTSPPPPPPSTPPPASSSRSLLSALRRSP. Residues 16-28 show a composition bias toward pro residues; it reads SPPPPPPSTPPPA. Residues 43–59 form a helical; Signal-anchor for type II membrane protein membrane-spanning segment; that stretch reads VTTLVAAFFLLALFMYG. Topologically, residues 60–455 are lumenal; that stretch reads EDVRTLAELS…PSTHPSLPPQ (396 aa). N-linked (GlcNAc...) asparagine glycans are attached at residues Asn82, Asn107, and Asn146. 4 disulfide bridges follow: Cys96/Cys147, Cys118/Cys183, Cys127/Cys423, and Cys339/Cys419. A GDS motif motif is present at residues 170 to 172; the sequence is GDS. Residue Ser172 is the Nucleophile of the active site. Asn278 and Asn348 each carry an N-linked (GlcNAc...) asparagine glycan. The active-site Proton donor is Asp418. The DXXH motif signature appears at 418 to 421; sequence DCIH. Catalysis depends on His421, which acts as the Proton acceptor.

Belongs to the PC-esterase family. TBL subfamily. Highly expressed in leaves. Expressed in roots, stems and inflorescences.

It is found in the golgi apparatus membrane. Functionally, xylan acetyltransferase required for 2-O- and 3-O-monoacetylation of xylosyl residues in xylan. Catalyzes the 2-O-acetylation of xylan, followed by nonenzymatic acetyl migration to the O-3 position, resulting in products that are monoacetylated at both O-2 and O-3 positions. In Oryza sativa subsp. japonica (Rice), this protein is Xylan O-acetyltransferase 3.